Reading from the N-terminus, the 517-residue chain is Ribonuclease Y (517 aa).

Residues Met-1–Val-21 form a helical membrane-spanning segment. Residues Leu-207 to Asp-273 form the KH domain. The HD domain occupies Ala-333–Ala-426.

The protein belongs to the RNase Y family.

It localises to the cell membrane. Functionally, endoribonuclease that initiates mRNA decay. The sequence is that of Ribonuclease Y from Campylobacter fetus subsp. fetus (strain 82-40).